The chain runs to 751 residues: CCR4-NOT transcription complex subunit 3 (751 aa).

The disordered stretch occupies residues 240–534; sequence ATSPPSHSHM…QFSTTPEIKA (295 aa). A compositionally biased stretch (low complexity) spans 257–268; it reads SSSTPTSTTSSS. The span at 284-293 shows a compositional bias: basic and acidic residues; the sequence is DDKKRGRSTD. Residue T292 is modified to Phosphothreonine. The span at 294 to 315 shows a compositional bias: polar residues; the sequence is SEVSQSPAKNGSKPVHSNQHPQ. S299 is subject to Phosphoserine. Residues 317-330 show a composition bias toward pro residues; it reads PAVPPTYPSGPPPT. Residues 339 to 348 are compositionally biased toward polar residues; the sequence is GNNGASTPAA. The span at 441–450 shows a compositional bias: low complexity; it reads SSSGGSSASS. The segment covering 463–472 has biased composition (polar residues); it reads APSTSKESST. Over residues 473-498 the composition is skewed to low complexity; sequence AAPSGAGNVASGSGNNSGGPSLLVPL. Position 540 is a phosphoserine (S540). Residues 659 to 751 form a repressor domain region; the sequence is EFYQRLSTET…YRYLEDRDLQ (93 aa).

This sequence belongs to the CNOT2/3/5 family. Component of the CCR4-NOT complex; distinct complexes seem to exist that differ in the participation of probably mutually exclusive catalytic subunits. In the complex interacts directly with CNOT2. Interacts with TIP120B and NANOS2. Interacts with EBF1. Interacts in an RNA-independent manner with BICC1 (via KH domains).

The protein localises to the nucleus. The protein resides in the cytoplasm. It is found in the P-body. Component of the CCR4-NOT complex which is one of the major cellular mRNA deadenylases and is linked to various cellular processes including bulk mRNA degradation, miRNA-mediated repression, translational repression during translational initiation and general transcription regulation. Additional complex functions may be a consequence of its influence on mRNA expression. May be involved in metabolic regulation; may be involved in recruitment of the CCR4-NOT complex to deadenylation target mRNAs involved in energy metabolism. Involved in mitotic progression and regulation of the spindle assembly checkpoint by regulating the stability of MAD1L1 mRNA. Can repress transcription and may link the CCR4-NOT complex to transcriptional regulation; the repressive function may involve histone deacetylases. Involved in the maintenance of embryonic stem (ES) cell identity; prevents their differentiation towards extraembryonic trophectoderm lineages. This chain is CCR4-NOT transcription complex subunit 3 (Cnot3), found in Mus musculus (Mouse).